Reading from the N-terminus, the 100-residue chain is Replication restart protein PriB (100 aa).

Residues 1–100 (MTNRIELSGV…VLHADKISQI (100 aa)) form the SSB domain.

This sequence belongs to the PriB family. In terms of assembly, homodimer. Interacts with PriA and DnaT. Component of the replication restart primosome. Primosome assembly occurs via a 'hand-off' mechanism. PriA binds to replication forks, subsequently PriB then DnaT bind; DnaT then displaces ssDNA to generate the helicase loading substrate.

Functionally, involved in the restart of stalled replication forks, which reloads the replicative helicase on sites other than the origin of replication; the PriA-PriB pathway is the major replication restart pathway. During primosome assembly it facilitates complex formation between PriA and DnaT on DNA; stabilizes PriA on DNA. Stimulates the DNA unwinding activity of PriA helicase. This Vibrio cholerae serotype O1 (strain ATCC 39315 / El Tor Inaba N16961) protein is Replication restart protein PriB.